The sequence spans 35 residues: Photosystem II reaction center protein T (35 aa).

The chain crosses the membrane as a helical span at residues Ala3–Phe23.

Belongs to the PsbT family. In terms of assembly, PSII is composed of 1 copy each of membrane proteins PsbA, PsbB, PsbC, PsbD, PsbE, PsbF, PsbH, PsbI, PsbJ, PsbK, PsbL, PsbM, PsbT, PsbY, PsbZ, Psb30/Ycf12, at least 3 peripheral proteins of the oxygen-evolving complex and a large number of cofactors. It forms dimeric complexes.

Its subcellular location is the plastid. The protein localises to the chloroplast thylakoid membrane. Found at the monomer-monomer interface of the photosystem II (PS II) dimer, plays a role in assembly and dimerization of PSII. PSII is a light-driven water plastoquinone oxidoreductase, using light energy to abstract electrons from H(2)O, generating a proton gradient subsequently used for ATP formation. This chain is Photosystem II reaction center protein T, found in Nelumbo lutea (American lotus).